Here is a 342-residue protein sequence, read N- to C-terminus: S-adenosylmethionine:tRNA ribosyltransferase-isomerase (342 aa).

This sequence belongs to the QueA family. As to quaternary structure, monomer.

The protein resides in the cytoplasm. The catalysed reaction is 7-aminomethyl-7-carbaguanosine(34) in tRNA + S-adenosyl-L-methionine = epoxyqueuosine(34) in tRNA + adenine + L-methionine + 2 H(+). The protein operates within tRNA modification; tRNA-queuosine biosynthesis. In terms of biological role, transfers and isomerizes the ribose moiety from AdoMet to the 7-aminomethyl group of 7-deazaguanine (preQ1-tRNA) to give epoxyqueuosine (oQ-tRNA). The polypeptide is S-adenosylmethionine:tRNA ribosyltransferase-isomerase (Streptococcus pyogenes serotype M3 (strain ATCC BAA-595 / MGAS315)).